Consider the following 272-residue polypeptide: 3-methyl-2-oxobutanoate hydroxymethyltransferase (272 aa).

D42 and D86 together coordinate Mg(2+). 3-methyl-2-oxobutanoate-binding positions include 42–43 (DS), D86, and K116. A Mg(2+)-binding site is contributed by E118. E185 (proton acceptor) is an active-site residue. Residues 251–272 (LKEQRDQRATPTTPPPPPAPDC) are disordered. Residues 262–272 (TTPPPPPAPDC) show a composition bias toward pro residues.

Belongs to the PanB family. Homodecamer; pentamer of dimers. Mg(2+) is required as a cofactor.

Its subcellular location is the cytoplasm. It catalyses the reaction 3-methyl-2-oxobutanoate + (6R)-5,10-methylene-5,6,7,8-tetrahydrofolate + H2O = 2-dehydropantoate + (6S)-5,6,7,8-tetrahydrofolate. The protein operates within cofactor biosynthesis; (R)-pantothenate biosynthesis; (R)-pantoate from 3-methyl-2-oxobutanoate: step 1/2. Catalyzes the reversible reaction in which hydroxymethyl group from 5,10-methylenetetrahydrofolate is transferred onto alpha-ketoisovalerate to form ketopantoate. The polypeptide is 3-methyl-2-oxobutanoate hydroxymethyltransferase (Synechococcus sp. (strain CC9311)).